The chain runs to 305 residues: tRNA pseudouridine synthase B (305 aa).

The active-site Nucleophile is the aspartate 48.

It belongs to the pseudouridine synthase TruB family. Type 1 subfamily.

It catalyses the reaction uridine(55) in tRNA = pseudouridine(55) in tRNA. Responsible for synthesis of pseudouridine from uracil-55 in the psi GC loop of transfer RNAs. The chain is tRNA pseudouridine synthase B from Pseudomonas putida (strain GB-1).